Reading from the N-terminus, the 906-residue chain is MNPLKILIWNANGISRKAKDVELFAHNKKVDILLVTELRLKRGETVKIYGYAYYPAYRPSLNNNSVGGVAVFVRTTLRHFPQRVIETRHIQLSSVKVATGLGDLQFSAIYCSPSTRIEERHFTDIIRACGQRYLVGGDWNARHWLWGDTCNSPRGRELAEALSVTGAKILATGSPTRYPYVPSHTPSCIDFAVYHGIPDHLATITQSWDLDSDHLPLIISIETDSTHVNPSPRLVTKHTDLLAFSRQLESLISLNTTLNSGEEIEMAVDNLTESIHRAAAVSTSPVPRIGTTYGIVLTREARELLTQKRRLRRRAIRSQDPWDRLLWNRAAKQLRNVLRELRSNFFEQKLASMDYTVDAGYSLWKCTKSLKRQPFRQVPIRCPGGELAKNEEEQANCFANHLETRFTHFQFATTEQYQETLDSLETPLQMSLPIKPIRVEEIVEAIKSLPLKKSPGIDNVCNATLKALPVRAILYLALIYNAILRVQFFPKQWKMAAILMIHKPGKPEESPESYRPISLLSSLSKLWERLIANRLNDIMTERRILPDHQFGFRQGHSTVEQVHRLTKHILQAFDDKEYCNAVFIDMQQAFDRVWHDGLISKVKKLFPAPYYGVLKSYLEDRRFMVRVRNSYSIPRVMRAGVPQGSVLGPLLYSVFTADLPCPNAYHMADPRKALLATYADDIALLYSSNCCNEAARGLQEYLTTLAAWCKRWILKVNPQKTINPCFTLKTLSPVTAPIELEGVILDQPSQAKYLGITLDKRLTFGPHLKATTRRCYQRMQQLRWLLNRKSTMTLRAKRAVYVHCVAPIWLYGIQIWGIAAKSNYNRIQVLQNRAMRAITDCPYYVRGTTLHRDLNLHTVEEQISRHTSRYSDRLRRHHSILARRLLPARPLRRLKRKGFAKTLGQP.

In terms of domain architecture, Reverse transcriptase spans 482 to 758; it reads AILRVQFFPK…SQAKYLGITL (277 aa).

The cofactor is Mg(2+). Mn(2+) is required as a cofactor.

It catalyses the reaction DNA(n) + a 2'-deoxyribonucleoside 5'-triphosphate = DNA(n+1) + diphosphate. The sequence is that of Probable RNA-directed DNA polymerase from transposon BS from Drosophila melanogaster (Fruit fly).